The chain runs to 591 residues: Aspartate--tRNA ligase (591 aa).

Glu-176 contacts L-aspartate. Residues 200–203 are aspartate; that stretch reads QILK. Arg-222 is a binding site for L-aspartate. ATP is bound by residues 222-224 and Gln-231; that span reads RDE. His-450 is an L-aspartate binding site. Glu-484 lines the ATP pocket. Arg-491 is a binding site for L-aspartate. 536-539 contributes to the ATP binding site; the sequence is GLDR.

Belongs to the class-II aminoacyl-tRNA synthetase family. Type 1 subfamily. Homodimer.

It is found in the cytoplasm. The catalysed reaction is tRNA(Asp) + L-aspartate + ATP = L-aspartyl-tRNA(Asp) + AMP + diphosphate. Its function is as follows. Catalyzes the attachment of L-aspartate to tRNA(Asp) in a two-step reaction: L-aspartate is first activated by ATP to form Asp-AMP and then transferred to the acceptor end of tRNA(Asp). This chain is Aspartate--tRNA ligase, found in Listeria monocytogenes serotype 4a (strain HCC23).